We begin with the raw amino-acid sequence, 511 residues long: Glutamyl-tRNA(Gln) amidotransferase subunit B, mitochondrial (511 aa).

The N-terminal 6 residues, Met-1–Leu-6, are a transit peptide targeting the mitochondrion.

This sequence belongs to the GatB/GatE family. GatB subfamily. As to quaternary structure, subunit of the heterotrimeric GatFAB amidotransferase (AdT) complex, composed of A, B and F subunits.

It localises to the mitochondrion. The enzyme catalyses L-glutamyl-tRNA(Gln) + L-glutamine + ATP + H2O = L-glutaminyl-tRNA(Gln) + L-glutamate + ADP + phosphate + H(+). In terms of biological role, allows the formation of correctly charged Gln-tRNA(Gln) through the transamidation of misacylated Glu-tRNA(Gln) in the mitochondria. The reaction takes place in the presence of glutamine and ATP through an activated gamma-phospho-Glu-tRNA(Gln). The polypeptide is Glutamyl-tRNA(Gln) amidotransferase subunit B, mitochondrial (Lodderomyces elongisporus (strain ATCC 11503 / CBS 2605 / JCM 1781 / NBRC 1676 / NRRL YB-4239) (Yeast)).